A 687-amino-acid polypeptide reads, in one-letter code: Probable ATP-dependent RNA helicase Dbp73D (687 aa).

2 disordered regions span residues 1–26 (MELF…TNNE) and 52–87 (TPIL…EEDV). Composition is skewed to basic and acidic residues over residues 9 to 18 (YTEDLKEQKD) and 54 to 79 (ILEK…EKPL). The Q motif signature appears at 160-168 (LFPVQKQVI). The 205-residue stretch at 177-381 (KPPPFRPRDI…DLRLFQPRLF (205 aa)) folds into the Helicase ATP-binding domain. Position 190 to 197 (190 to 197 (APTGSGKT)) interacts with ATP. The DEAD box signature appears at 305 to 308 (DEAD). Positions 434–583 (TVFALVEKYK…EIHVSPDIEI (150 aa)) constitute a Helicase C-terminal domain. Positions 646–675 (IVQSSKKSSETKNSKTKADKTKYQPKETKK) are disordered. The span at 652–675 (KSSETKNSKTKADKTKYQPKETKK) shows a compositional bias: basic and acidic residues.

It belongs to the DEAD box helicase family. DDX51/DBP6 subfamily. In terms of tissue distribution, expressed in the germline tissue of the ovary.

It localises to the nucleus. The protein resides in the nucleolus. The enzyme catalyses ATP + H2O = ADP + phosphate + H(+). Functionally, ATP-binding RNA helicase involved in the biogenesis of 60S ribosomal subunits. This Drosophila melanogaster (Fruit fly) protein is Probable ATP-dependent RNA helicase Dbp73D (Dbp73D).